Consider the following 142-residue polypeptide: Maximins y/H11 (142 aa).

A signal peptide spans 1 to 18 (MNFKYIVAVSFLITSGYA). Positions 19–43 (ESVKNDEQSLSQRDVLEEESLREIR) are excised as a propeptide. The residue at position 68 (Phe-68) is a Phenylalanine amide. Residues 72 to 121 (SAEDHEVMKRLEAVIRDLDSLDHPEEASERETRGFNQEEIANLFTKKEKR) constitute a propeptide that is removed on maturation. The residue at position 141 (Ile-141) is an Isoleucine amide.

Belongs to the bombinin family. Expressed by the skin glands.

It is found in the secreted. Its function is as follows. Maximin-y shows antimicrobial activity against bacteria and against the fungus C.albicans. It has little hemolytic activity. Maximin-H11 shows antimicrobial activity against bacteria and against the fungus C.albicans. Shows strong hemolytic activity. This is Maximins y/H11 from Bombina maxima (Giant fire-bellied toad).